Reading from the N-terminus, the 194-residue chain is Probable DNA-directed RNA polymerase subunit delta (194 aa).

One can recognise an HTH HARE-type domain in the interval 14-83; the sequence is LSMIEVARAI…GENKWGLRSW (70 aa). The interval 117–194 is disordered; it reads GDEDAIDYSD…SDDEEDEEGE (78 aa).

This sequence belongs to the RpoE family. RNAP is composed of a core of 2 alpha, a beta and a beta' subunits. The core is associated with a delta subunit and one of several sigma factors.

In terms of biological role, participates in both the initiation and recycling phases of transcription. In the presence of the delta subunit, RNAP displays an increased specificity of transcription, a decreased affinity for nucleic acids, and an increased efficiency of RNA synthesis because of enhanced recycling. The sequence is that of Probable DNA-directed RNA polymerase subunit delta from Streptococcus mutans serotype c (strain ATCC 700610 / UA159).